The chain runs to 257 residues: MKKTAFILLLFIALTLTTSPLVNGSEKSEEINEKDLRKKSELQRNALSNLRQIYYYNEKAITENKESDDQFLENTLLFKGFFTGHPWYNDLLVDLGSKDATNKYKGKKVDLYGAYYGYQCAGGTPNKTACMYGGVTLHDNNRLTEEKKVPINLWIDGKQTTVPIDKVKTSKKEVTVQELDLQARHYLHGKFGLYNSDSFGGKVQRGLIVFHSSEGSTVSYDLFDAQGQYPDTLLRIYRDNKTINSENLHIDLYLYTT.

Positions M1–K27 are cleaved as a signal peptide. A disulfide bridge connects residues C120 and C130. Residues H211, H249, and D251 each coordinate Zn(2+).

It belongs to the staphylococcal/streptococcal toxin family. As to quaternary structure, interacts with host MHC class II molecules composed of alpha/HLA-DRA and beta/HLA-DRB1 chains. Interacts with host T-cell receptor beta variable TRBV7-9. Zn(2+) serves as cofactor.

The protein resides in the secreted. Its function is as follows. Staphylococcal enterotoxin that activates the host immune system by binding as unprocessed molecules to major histocompatibility (MHC) complex class II and T-cell receptor (TCR) molecules. In turn, this ternary complex activates a large number of T-lymphocytes initiating a systemic release of pro-inflammatory cytokines. Also causes the intoxication staphylococcal food poisoning syndrome. This chain is Enterotoxin type E (entE), found in Staphylococcus aureus.